The primary structure comprises 385 residues: Tumor protein p53-inducible protein 13 (385 aa).

An N-terminal signal peptide occupies residues Met1–Ala27. The Extracellular segment spans residues Glu28–Glu301. The disordered stretch occupies residues Ala242–Pro297. The segment covering Pro281–Pro297 has biased composition (low complexity). The chain crosses the membrane as a helical span at residues Ala302–Cys322. At Thr323–Asp385 the chain is on the cytoplasmic side. The segment covering Ser359–Pro369 has biased composition (basic residues). Residues Ser359 to Asp385 form a disordered region.

The protein resides in the cell membrane. It is found in the cytoplasm. May act as a tumor suppressor. Inhibits tumor cell growth, when overexpressed. The sequence is that of Tumor protein p53-inducible protein 13 (Tp53i13) from Mus musculus (Mouse).